Reading from the N-terminus, the 394-residue chain is NAD(P)H-quinone oxidoreductase subunit H (394 aa).

This sequence belongs to the complex I 49 kDa subunit family. In terms of assembly, NDH-1 can be composed of about 15 different subunits; different subcomplexes with different compositions have been identified which probably have different functions. Post-translationally, the initiator methionine has been seen to be kept and removed.

The protein localises to the cellular thylakoid membrane. The enzyme catalyses a plastoquinone + NADH + (n+1) H(+)(in) = a plastoquinol + NAD(+) + n H(+)(out). It carries out the reaction a plastoquinone + NADPH + (n+1) H(+)(in) = a plastoquinol + NADP(+) + n H(+)(out). Its function is as follows. NDH-1 shuttles electrons from an unknown electron donor, via FMN and iron-sulfur (Fe-S) centers, to quinones in the respiratory and/or the photosynthetic chain. The immediate electron acceptor for the enzyme in this species is believed to be plastoquinone. Couples the redox reaction to proton translocation, and thus conserves the redox energy in a proton gradient. Cyanobacterial NDH-1 also plays a role in inorganic carbon-concentration. This is NAD(P)H-quinone oxidoreductase subunit H (ndhH) from Synechocystis sp. (strain ATCC 27184 / PCC 6803 / Kazusa).